A 137-amino-acid polypeptide reads, in one-letter code: SPbeta prophage-derived disulfide bond formation protein A (137 aa).

The first 25 residues, 1-25, serve as a signal peptide directing secretion; the sequence is MKKWIVLFLVLIAAAISIFVYVSTG. The 111-residue stretch at 26 to 136 folds into the Thioredoxin domain; that stretch reads SEKPFYNDIN…IEKFFDKNGD (111 aa). A disulfide bridge connects residues C58 and C61.

The protein belongs to the thioredoxin family.

It is found in the secreted. Functionally, unknown; dispensable for production of the lantibiotic sublancin 168 and for competence for DNA uptake. This Bacillus subtilis (strain 168) protein is SPbeta prophage-derived disulfide bond formation protein A (bdbA).